The sequence spans 72 residues: Peptide Ctri9194 (72 aa).

The N-terminal stretch at methionine 1–threonine 23 is a signal peptide. Isoleucine 38 is modified (isoleucine amide). Residues serine 42–tyrosine 72 constitute a propeptide that is removed on maturation.

This sequence belongs to the non-disulfide-bridged peptide (NDBP) superfamily. Short antimicrobial peptide (group 4) family. In terms of tissue distribution, expressed by the venom gland.

It localises to the secreted. Antimicrobial peptide. This Chaerilus tricostatus (Scorpion) protein is Peptide Ctri9194.